A 428-amino-acid chain; its full sequence is Histidinol dehydrogenase (428 aa).

Positions 125, 187, and 210 each coordinate NAD(+). 3 residues coordinate substrate: S234, Q256, and H259. Residues Q256 and H259 each coordinate Zn(2+). Catalysis depends on proton acceptor residues E323 and H324. Substrate-binding residues include H324, D357, E411, and H416. D357 contacts Zn(2+). Residue H416 participates in Zn(2+) binding.

This sequence belongs to the histidinol dehydrogenase family. The cofactor is Zn(2+).

The catalysed reaction is L-histidinol + 2 NAD(+) + H2O = L-histidine + 2 NADH + 3 H(+). The protein operates within amino-acid biosynthesis; L-histidine biosynthesis; L-histidine from 5-phospho-alpha-D-ribose 1-diphosphate: step 9/9. Functionally, catalyzes the sequential NAD-dependent oxidations of L-histidinol to L-histidinaldehyde and then to L-histidine. In Bacteroides thetaiotaomicron (strain ATCC 29148 / DSM 2079 / JCM 5827 / CCUG 10774 / NCTC 10582 / VPI-5482 / E50), this protein is Histidinol dehydrogenase.